A 478-amino-acid chain; its full sequence is Sulfate adenylyltransferase subunit 1 (478 aa).

Residues 28-244 form the tr-type G domain; sequence KTMLRFLTCG…LESVDVVNAS (217 aa). Residues 37 to 44 form a G1 region; it reads GSVDDGKS. Residue 37–44 coordinates GTP; that stretch reads GSVDDGKS. Residues 95–99 are G2; that stretch reads GITID. The segment at 116–119 is G3; the sequence is DTPG. GTP-binding positions include 116-120 and 171-174; these read DTPGH and NKMD. The G4 stretch occupies residues 171-174; it reads NKMD. Positions 209-211 are G5; the sequence is SAL.

This sequence belongs to the TRAFAC class translation factor GTPase superfamily. Classic translation factor GTPase family. CysN/NodQ subfamily. As to quaternary structure, heterodimer composed of CysD, the smaller subunit, and CysN.

It carries out the reaction sulfate + ATP + H(+) = adenosine 5'-phosphosulfate + diphosphate. Its pathway is sulfur metabolism; hydrogen sulfide biosynthesis; sulfite from sulfate: step 1/3. Functionally, with CysD forms the ATP sulfurylase (ATPS) that catalyzes the adenylation of sulfate producing adenosine 5'-phosphosulfate (APS) and diphosphate, the first enzymatic step in sulfur assimilation pathway. APS synthesis involves the formation of a high-energy phosphoric-sulfuric acid anhydride bond driven by GTP hydrolysis by CysN coupled to ATP hydrolysis by CysD. The polypeptide is Sulfate adenylyltransferase subunit 1 (Yersinia enterocolitica serotype O:8 / biotype 1B (strain NCTC 13174 / 8081)).